A 150-amino-acid polypeptide reads, in one-letter code: Large ribosomal subunit protein bL9 (150 aa).

Belongs to the bacterial ribosomal protein bL9 family.

Functionally, binds to the 23S rRNA. In Staphylococcus aureus (strain NCTC 8325 / PS 47), this protein is Large ribosomal subunit protein bL9.